We begin with the raw amino-acid sequence, 1113 residues long: Antigenic protein P1 (1113 aa).

Residues 7 to 27 traverse the membrane as a helical segment; the sequence is IIAVVAIASAIVTGVVVIVVV. 17 N-linked (GlcNAc...) asparagine glycosylation sites follow: N121, N207, N225, N233, N274, N533, N576, N622, N675, N679, N730, N753, N880, N899, N907, N972, and N995. Residues 159-473 form the Peptidase M60 domain; it reads VFGQRAVAWA…SYVNMAHAFG (315 aa). The 153-residue stretch at 648–800 folds into the PA14 domain; that stretch reads LDPHQVEYEV…TEESSVDVSK (153 aa).

It localises to the membrane. The protein is Antigenic protein P1 of Entamoeba histolytica (strain ATCC 30459 / HM-1:IMSS / ABRM).